The sequence spans 335 residues: Terpene synthase 4 (335 aa).

Positions 103-108 (DDYIFE) match the DDxx(x)D/E motif motif. The short motif at 243-251 (NDLYSFNRE) is the NDxxSxxxD/E motif element.

This sequence belongs to the terpene synthase family.

It carries out the reaction (2E,6E)-farnesyl diphosphate + H2O = (6E)-nerolidol + diphosphate. Its function is as follows. Terpene synthase that converts its substrate farnesyl diphosphate (FPP) into the sesquiterpene (E)-nerolidol. This chain is Terpene synthase 4, found in Dictyostelium discoideum (Social amoeba).